A 256-amino-acid polypeptide reads, in one-letter code: uncharacterized protein (256 aa).

The N-terminal stretch at M1–G24 is a signal peptide. Residue C25 is the site of N-palmitoyl cysteine attachment. Residue C25 is the site of S-diacylglycerol cysteine attachment.

Belongs to the staphylococcal tandem lipoprotein family.

It localises to the cell membrane. This is an uncharacterized protein from Staphylococcus aureus (strain NCTC 8325 / PS 47).